We begin with the raw amino-acid sequence, 723 residues long: FACT complex subunit Ssrp1 (723 aa).

A Phosphoserine modification is found at Ser443. 2 disordered regions span residues 459–564 and 586–723; these read EARE…AFML and AKKG…EASD. Acidic residues-rich tracts occupy residues 464 to 478 and 486 to 507; these read EEDD…ESTD and NESD…DDSD. The span at 531–557 shows a compositional bias: basic residues; the sequence is KKEKKHKEKERTKKPSKKKKDSGKPKR. The segment at residues 555–621 is a DNA-binding region (HMG box); it reads PKRATTAFML…RYHDEMRNYK (67 aa). Over residues 586 to 621 the composition is skewed to basic and acidic residues; sequence AKKGGEMWKELKDKSKWEDAAAKDKQRYHDEMRNYK. Ser628 carries the post-translational modification Phosphoserine. Residues 644–656 show a composition bias toward polar residues; that stretch reads PSPSKKANTSGSG. Phosphoserine is present on residues Ser664 and Ser668. Over residues 664-676 the composition is skewed to acidic residues; it reads SDDDSTSSDDEKD. The residue at position 669 (Thr669) is a Phosphothreonine. 2 positions are modified to phosphoserine: Ser670 and Ser671. Over residues 677 to 692 the composition is skewed to basic and acidic residues; that stretch reads NEPAKKKSKPPSDGDA. The span at 702 to 723 shows a compositional bias: acidic residues; the sequence is EPEESEEDSNASDEDEEDEASD.

The protein belongs to the SSRP1 family. As to quaternary structure, component of the FACT complex, a stable heterodimer of dre4/spt16 and Ssrp. Interacts with CHD1 and TRL/GAGA. Expressed at highest levels in nurse cells of the ovary.

The protein localises to the nucleus. Its subcellular location is the chromosome. The protein resides in the nucleolus. Functionally, component of the FACT complex, a general chromatin factor that acts to reorganize nucleosomes. The FACT complex is involved in multiple processes that require DNA as a template such as mRNA elongation, DNA replication and DNA repair. During transcription elongation the FACT complex acts as a histone chaperone that both destabilizes and restores nucleosomal structure. It facilitates the passage of RNA polymerase II and transcription by promoting the dissociation of one histone H2A-H2B dimer from the nucleosome, then subsequently promotes the reestablishment of the nucleosome following the passage of RNA polymerase II. Binds specifically to single-stranded DNA and RNA with highest affinity for nucleotides G and U. The FACT complex is required for expression of Hox genes. This Drosophila melanogaster (Fruit fly) protein is FACT complex subunit Ssrp1 (Ssrp).